Here is a 99-residue protein sequence, read N- to C-terminus: Integration host factor subunit alpha (99 aa).

A disordered region spans residues 49 to 72 (FGNFDLRDKNQRPGRNPKTGEDIP).

The protein belongs to the bacterial histone-like protein family. Heterodimer of an alpha and a beta chain.

In terms of biological role, this protein is one of the two subunits of integration host factor, a specific DNA-binding protein that functions in genetic recombination as well as in transcriptional and translational control. This chain is Integration host factor subunit alpha, found in Escherichia coli O9:H4 (strain HS).